Reading from the N-terminus, the 124-residue chain is Small ribosomal subunit protein uS12 (124 aa).

3-methylthioaspartic acid is present on Asp-89.

This sequence belongs to the universal ribosomal protein uS12 family. In terms of assembly, part of the 30S ribosomal subunit. Contacts proteins S8 and S17. May interact with IF1 in the 30S initiation complex.

With S4 and S5 plays an important role in translational accuracy. Its function is as follows. Interacts with and stabilizes bases of the 16S rRNA that are involved in tRNA selection in the A site and with the mRNA backbone. Located at the interface of the 30S and 50S subunits, it traverses the body of the 30S subunit contacting proteins on the other side and probably holding the rRNA structure together. The combined cluster of proteins S8, S12 and S17 appears to hold together the shoulder and platform of the 30S subunit. This is Small ribosomal subunit protein uS12 from Prochlorococcus marinus (strain SARG / CCMP1375 / SS120).